The sequence spans 208 residues: Protein GrpE (208 aa).

The segment covering 1-25 has biased composition (basic and acidic residues); it reads MVDNKDFNEELKENIQEELDNETKA. The segment at 1-38 is disordered; the sequence is MVDNKDFNEELKENIQEELDNETKAENPNIDEEVEEVS. The span at 29-38 shows a compositional bias: acidic residues; sequence NIDEEVEEVS.

Belongs to the GrpE family. Homodimer.

It is found in the cytoplasm. In terms of biological role, participates actively in the response to hyperosmotic and heat shock by preventing the aggregation of stress-denatured proteins, in association with DnaK and GrpE. It is the nucleotide exchange factor for DnaK and may function as a thermosensor. Unfolded proteins bind initially to DnaJ; upon interaction with the DnaJ-bound protein, DnaK hydrolyzes its bound ATP, resulting in the formation of a stable complex. GrpE releases ADP from DnaK; ATP binding to DnaK triggers the release of the substrate protein, thus completing the reaction cycle. Several rounds of ATP-dependent interactions between DnaJ, DnaK and GrpE are required for fully efficient folding. In Clostridium perfringens (strain 13 / Type A), this protein is Protein GrpE.